A 212-amino-acid polypeptide reads, in one-letter code: ATP-dependent dethiobiotin synthetase BioD (212 aa).

12–17 (DCGKTF) provides a ligand contact to ATP. Thr-16 is a binding site for Mg(2+). The active site involves Lys-33. Ser-37 is a substrate binding site. ATP-binding positions include Asp-50, 110–113 (EGAG), and 170–171 (NC). Residues Asp-50 and Glu-110 each contribute to the Mg(2+) site.

The protein belongs to the dethiobiotin synthetase family. Homodimer. Mg(2+) is required as a cofactor.

The protein resides in the cytoplasm. It carries out the reaction (7R,8S)-7,8-diammoniononanoate + CO2 + ATP = (4R,5S)-dethiobiotin + ADP + phosphate + 3 H(+). It participates in cofactor biosynthesis; biotin biosynthesis; biotin from 7,8-diaminononanoate: step 1/2. In terms of biological role, catalyzes a mechanistically unusual reaction, the ATP-dependent insertion of CO2 between the N7 and N8 nitrogen atoms of 7,8-diaminopelargonic acid (DAPA, also called 7,8-diammoniononanoate) to form a ureido ring. This Legionella pneumophila (strain Paris) protein is ATP-dependent dethiobiotin synthetase BioD.